We begin with the raw amino-acid sequence, 283 residues long: NAD kinase (283 aa).

D66 serves as the catalytic Proton acceptor. NAD(+)-binding positions include 66-67, R71, 137-138, H165, D167, and 178-183; these read DG, ND, and TGYSMS.

Belongs to the NAD kinase family. A divalent metal cation serves as cofactor.

Its subcellular location is the cytoplasm. It catalyses the reaction NAD(+) + ATP = ADP + NADP(+) + H(+). Its function is as follows. Involved in the regulation of the intracellular balance of NAD and NADP, and is a key enzyme in the biosynthesis of NADP. Catalyzes specifically the phosphorylation on 2'-hydroxyl of the adenosine moiety of NAD to yield NADP. This chain is NAD kinase, found in Agathobacter rectalis (strain ATCC 33656 / DSM 3377 / JCM 17463 / KCTC 5835 / VPI 0990) (Eubacterium rectale).